The chain runs to 345 residues: Anthranilate phosphoribosyltransferase (345 aa).

5-phospho-alpha-D-ribose 1-diphosphate-binding positions include 77 to 79, 82 to 83, threonine 87, 89 to 92, 106 to 114, and serine 118; these read TAG, GD, NVST, and KHGNRAVSG. Glycine 79 serves as a coordination point for anthranilate. Serine 91 serves as a coordination point for Mg(2+). Anthranilate is bound at residue asparagine 109. Arginine 164 contributes to the anthranilate binding site. 2 residues coordinate Mg(2+): aspartate 223 and glutamate 224.

The protein belongs to the anthranilate phosphoribosyltransferase family. In terms of assembly, homodimer. Mg(2+) serves as cofactor.

The catalysed reaction is N-(5-phospho-beta-D-ribosyl)anthranilate + diphosphate = 5-phospho-alpha-D-ribose 1-diphosphate + anthranilate. Its pathway is amino-acid biosynthesis; L-tryptophan biosynthesis; L-tryptophan from chorismate: step 2/5. Functionally, catalyzes the transfer of the phosphoribosyl group of 5-phosphorylribose-1-pyrophosphate (PRPP) to anthranilate to yield N-(5'-phosphoribosyl)-anthranilate (PRA). This chain is Anthranilate phosphoribosyltransferase, found in Saccharolobus solfataricus (strain ATCC 35092 / DSM 1617 / JCM 11322 / P2) (Sulfolobus solfataricus).